We begin with the raw amino-acid sequence, 261 residues long: uncharacterized protein (261 aa).

The first 22 residues, 1-22 (MKSIKRIGLCISLLILIIFVTS), serve as a signal peptide directing secretion. Cys23 is lipidated: N-palmitoyl cysteine. The S-diacylglycerol cysteine moiety is linked to residue Cys23.

It belongs to the staphylococcal tandem lipoprotein family.

The protein resides in the cell membrane. This is an uncharacterized protein from Staphylococcus aureus (strain USA300).